Consider the following 444-residue polypeptide: C4-dicarboxylate transport protein (444 aa).

Helical transmembrane passes span phenylalanine 18–tyrosine 40, alanine 53–alanine 75, alanine 90–valine 112, isoleucine 142–alanine 159, isoleucine 163–valine 180, leucine 201–glycine 222, leucine 232–valine 254, leucine 327–alanine 349, and phenylalanine 364–leucine 386.

This sequence belongs to the dicarboxylate/amino acid:cation symporter (DAACS) (TC 2.A.23) family.

The protein localises to the cell inner membrane. In terms of biological role, responsible for the transport of dicarboxylates such as succinate, fumarate, and malate from the periplasm across the inner membrane. This transport system plays an important role in the energy supply of rhizobium-legume symbionts. This Rhizobium leguminosarum protein is C4-dicarboxylate transport protein (dctA).